We begin with the raw amino-acid sequence, 2620 residues long: Ankyrin repeat and KH domain-containing protein mask-1 (2620 aa).

ANK repeat units lie at residues 254–283 (SKIT…DPNV), 288–318 (NCNT…KKPD), 361–390 (ERDS…KNPP), 402–431 (ERYS…PADL), 437–466 (IEPS…KIEE), 470–502 (KKNT…EVDV), 507–536 (TGDT…DLTA), 538–566 (KTSP…TIPQ), 568–597 (QLSR…DLNF), 600–629 (DERT…SVNF), 634–663 (NDAT…DPML), and 667–697 (DGVN…NMPM). 3 disordered regions span residues 699–726 (KDPP…SGQD), 994–1032 (HQEE…QPGA), and 1192–1229 (SLMA…AIDK). Residues 1012–1029 (TSLTAPNPADTSDVTTKQ) show a composition bias toward polar residues. The segment covering 1192-1206 (SLMAKSVQSQQQQGQ) has biased composition (low complexity). The segment covering 1210–1221 (THSEGDGAERAK) has biased composition (basic and acidic residues). ANK repeat units lie at residues 1234–1263 (TLET…NIEH), 1267–1296 (KGFS…AIEA), 1301–1330 (TKDT…NKEH), 1334–1363 (SDYT…EINS), 1369–1398 (LGIS…DINA), 1403–1432 (NRNT…NVEH), 1436–1465 (TGLT…DTNA), 1471–1500 (TKDT…AVDV), 1504–1533 (KGCT…DPDM), and 1537–1566 (RKIS…QFPN). A coiled-coil region spans residues 1596-1648 (AKKAQAESAELAAQKLLELIDEEKVQKEVKKQKQKDKKIKKKEEKKIKKQEAE). Disordered stretches follow at residues 1621 to 1720 (QKEV…AEEP) and 1759 to 1804 (KEGK…EIDT). Residues 1636 to 1647 (KKEEKKIKKQEA) are compositionally biased toward basic and acidic residues. Positions 1648-1661 (EPEPEPEPEPEPVP) are enriched in acidic residues. Low complexity-rich tracts occupy residues 1665 to 1681 (PVVI…IVVE) and 1769 to 1791 (KSGY…TTSS). Residues 1807 to 1873 (ESSWKLTIPA…EMVRYAMNII (67 aa)) enclose the KH domain. A compositionally biased stretch (polar residues) spans 1899-1913 (ASSFSSEGTSKSAVD). Disordered stretches follow at residues 1899–1962 (ASSF…GNVW), 1976–2010 (LMET…QASE), 2067–2143 (SVQS…QTQN), 2267–2294 (NATS…VTTG), 2307–2343 (SFAP…QQQQ), 2372–2391 (QHQS…KFSM), 2429–2448 (QESS…NSYY), and 2496–2620 (QKKQ…SSNW). Residues 1917–1946 (APSSIPKSLSSASIARQSASPIPQQSSQRS) are compositionally biased toward low complexity. The segment covering 1982 to 1993 (ISQSPKQAPQIP) has biased composition (polar residues). 3 stretches are compositionally biased toward low complexity: residues 1994–2006 (STQQ…SRQD), 2067–2078 (SVQSVQHMQQQQ), and 2100–2118 (SQPI…SSFS). Composition is skewed to polar residues over residues 2267-2286 (NATS…VQQP) and 2325-2339 (RSQS…STNI). A compositionally biased stretch (polar residues) spans 2505 to 2528 (SFMHNSQQPQPFGAPSNASANQSR). Residues 2535–2547 (RPQPPPFVAPQAP) are compositionally biased toward pro residues. The span at 2552–2565 (SLGNASSTTNPSRT) shows a compositional bias: polar residues. Low complexity-rich tracts occupy residues 2566–2588 (SMQQ…QMPQ) and 2597–2620 (QQQQ…SSNW).

The protein belongs to the mask family.

The protein localises to the cytoplasm. In Caenorhabditis elegans, this protein is Ankyrin repeat and KH domain-containing protein mask-1.